The chain runs to 481 residues: Rhamnogalacturonan I rhamnosyltransferase 4 (481 aa).

The chain crosses the membrane as a helical; Signal-anchor for type II membrane protein span at residues 33 to 55 (VWFFRVCSCILVWTCLIQLFWHS). Residues Asn85 and Asn118 are each glycosylated (N-linked (GlcNAc...) asparagine). Substrate is bound at residue 258–260 (HLR). Residues Asn372 and Asn432 are each glycosylated (N-linked (GlcNAc...) asparagine).

It belongs to the glycosyltransferase GT106 family.

It is found in the golgi apparatus membrane. It catalyses the reaction alpha-D-galacturonosyl-[(1-&gt;2)-alpha-L-rhamnosyl-(1-&gt;4)-alpha-D-galacturonosyl](n) + UDP-beta-L-rhamnose = [(1-&gt;2)-alpha-L-rhamnosyl-(1-&gt;4)-alpha-D-galacturonosyl](n+1) + UDP + H(+). It participates in glycan metabolism; pectin biosynthesis. Functionally, glycosyltransferase involved in the formation of rhamnogalacturonan I (RG-I) oligosaccharides in the seed coat mucilage, which is a specialized cell wall with abundant RG-I. Transfers the rhamnose residue from UDP-beta-L-rhamnose to RG-I oligosaccharides. This Arabidopsis thaliana (Mouse-ear cress) protein is Rhamnogalacturonan I rhamnosyltransferase 4.